The following is a 390-amino-acid chain: Zinc transporter 7-B (390 aa).

The Cytoplasmic portion of the chain corresponds to 1–37 (MLPLSIKDDEYKPPKFNLVRKVSGWIRSIFSDSTSRN). A helical transmembrane segment spans residues 38–58 (LFCFLCLNLSFAFVELFYGIW). At 59–67 (SNSLGLISD) the chain is on the lumenal side. A helical membrane pass occupies residues 68–88 (SFHMFFDCTALLAGLAASVIS). Topologically, residues 89 to 102 (RWKTNETFSYGYVR) are cytoplasmic. The chain crosses the membrane as a helical span at residues 103–123 (AEVLAGFVNGLFLIFTAFFIF). Residues 124–140 (SEGIERALDTPEVHHER) lie on the Lumenal side of the membrane. The chain crosses the membrane as a helical span at residues 141–161 (LLPVSIMGFLVNLIGIFVFQH). The interval 161–226 (HGGGHGHSHE…GHDHSHKHGH (66 aa)) is his-rich loop. Residues 162-250 (GGGHGHSHES…KGSSKQILEG (89 aa)) lie on the Cytoplasmic side of the membrane. Residues 166-243 (GHSHESGHGH…DEPPEENKGS (78 aa)) form a disordered region. Positions 187 to 201 (GHSHSHGGGHGHSHG) are enriched in basic residues. Basic and acidic residues-rich tracts occupy residues 202 to 218 (GGHE…EHGH) and 232 to 242 (CHDEPPEENKG). The helical transmembrane segment at 251 to 271 (VFLHIVADALGSVGVIISTIL) threads the bilayer. Residues 272–276 (MQQYG) lie on the Lumenal side of the membrane. The chain crosses the membrane as a helical span at residues 277 to 297 (LMIADPICSMLIALLIFVSVI). Topologically, residues 298-390 (PLLKQSIGIL…LYVQIDLAAM (93 aa)) are cytoplasmic.

The protein belongs to the cation diffusion facilitator (CDF) transporter (TC 2.A.4) family. SLC30A subfamily. Homooligomer.

It localises to the golgi apparatus membrane. It is found in the cytoplasmic vesicle. Its subcellular location is the golgi apparatus. The protein resides in the trans-Golgi network. The protein localises to the sarcoplasmic reticulum. It localises to the mitochondrion. It catalyses the reaction Zn(2+)(in) = Zn(2+)(out). Functionally, zinc ion transporter mediating zinc entry from the cytosol into the lumen of organelles along the secretory pathway. By contributing to zinc ion homeostasis within the early secretory pathway, regulates the activation and folding of enzymes like alkaline phosphatases. The polypeptide is Zinc transporter 7-B (slc30a7-b) (Xenopus laevis (African clawed frog)).